The sequence spans 119 residues: Large ribosomal subunit protein eL31y (119 aa).

It belongs to the eukaryotic ribosomal protein eL31 family.

The protein is Large ribosomal subunit protein eL31y (RPL31B) of Arabidopsis thaliana (Mouse-ear cress).